The sequence spans 883 residues: Alanine--tRNA ligase (883 aa).

Residues His563, His567, Cys677, and His681 each coordinate Zn(2+).

This sequence belongs to the class-II aminoacyl-tRNA synthetase family. It depends on Zn(2+) as a cofactor.

The protein resides in the cytoplasm. It carries out the reaction tRNA(Ala) + L-alanine + ATP = L-alanyl-tRNA(Ala) + AMP + diphosphate. Its function is as follows. Catalyzes the attachment of alanine to tRNA(Ala) in a two-step reaction: alanine is first activated by ATP to form Ala-AMP and then transferred to the acceptor end of tRNA(Ala). Also edits incorrectly charged Ser-tRNA(Ala) and Gly-tRNA(Ala) via its editing domain. The chain is Alanine--tRNA ligase from Cereibacter sphaeroides (strain ATCC 17029 / ATH 2.4.9) (Rhodobacter sphaeroides).